The primary structure comprises 310 residues: Syntaxin-81 (310 aa).

At 1 to 289 the chain is on the cytoplasmic side; it reads MSRFRDRTED…QAIQRNSSSR (289 aa). The stretch at 77–114 forms a coiled coil; sequence RTTEQEKDSIEQEVAAFIKACKEQIDILINSIRNEEAN. A helical; Anchor for type IV membrane protein transmembrane segment spans residues 290–310; it reads TFLLLFFFVLTFSVLFLDWYS.

It belongs to the syntaxin family. In terms of assembly, part of the t-SNARE complex. Interacts with MAG2.

It is found in the membrane. Vesicle trafficking protein that functions in the secretory pathway. This chain is Syntaxin-81 (SYP81), found in Arabidopsis thaliana (Mouse-ear cress).